A 352-amino-acid chain; its full sequence is S-adenosylmethionine:tRNA ribosyltransferase-isomerase (352 aa).

The protein belongs to the QueA family. As to quaternary structure, monomer.

The protein resides in the cytoplasm. It carries out the reaction 7-aminomethyl-7-carbaguanosine(34) in tRNA + S-adenosyl-L-methionine = epoxyqueuosine(34) in tRNA + adenine + L-methionine + 2 H(+). It participates in tRNA modification; tRNA-queuosine biosynthesis. Transfers and isomerizes the ribose moiety from AdoMet to the 7-aminomethyl group of 7-deazaguanine (preQ1-tRNA) to give epoxyqueuosine (oQ-tRNA). This is S-adenosylmethionine:tRNA ribosyltransferase-isomerase from Paraburkholderia xenovorans (strain LB400).